The primary structure comprises 89 residues: Large ribosomal subunit protein bL27 (89 aa).

The segment at 1–21 (MAHKKAGGSSRNGRDSQSKRL) is disordered.

Belongs to the bacterial ribosomal protein bL27 family.

The polypeptide is Large ribosomal subunit protein bL27 (Rhizobium leguminosarum bv. trifolii (strain WSM2304)).